The chain runs to 342 residues: Serpentine receptor class beta-16 (342 aa).

Residues 1–22 (MDRELIEICKENSATAFSVGYQ) are Extracellular-facing. Residues 23–43 (IVYLIYVVLSVTSIFTCSYFI) form a helical membrane-spanning segment. Topologically, residues 44–61 (KTFIWNSTFHPNFKLLLT) are cytoplasmic. The chain crosses the membrane as a helical span at residues 62–82 (MYFFAAIFHSFLFTASYLMMI). Topologically, residues 83 to 102 (ERFLDYQTDCDIHVSMVPYA) are extracellular. Residues 103 to 123 (IVHSSIACCLFCGMLTQVFMV) traverse the membrane as a helical segment. At 124-141 (IERLLATIKIESYEHNTS) the chain is on the cytoplasmic side. Residues 142–162 (FWHILAYLFFCIVLPLSLLVW) traverse the membrane as a helical segment. The Extracellular segment spans residues 163–187 (AYQDADYNSPVITAISPPKGVEIRL). The chain crosses the membrane as a helical span at residues 188-208 (NILYIFCFFLAILALILLQVV). Topologically, residues 209–237 (RFVNKRRESRIEISLSGRFQIVENIDTTT) are cytoplasmic. Residues 238 to 258 (FISSILIINMIMSVIYIVGTF) form a helical membrane-spanning segment. The Extracellular portion of the chain corresponds to 259–274 (TLRNFQFDAFINNQPA). A helical membrane pass occupies residues 275–295 (LATVKTIFYLHPLFSFLMPLI). Topologically, residues 296 to 342 (SSYHLSKMRERRVKRREHLMAIKTKGREGSDAYNQLLHDQWTQHFLK) are cytoplasmic.

It belongs to the nematode receptor-like protein srb family. In terms of tissue distribution, expressed throughout the nervous system, in pharyngeal muscle, hermaphrodite vulval muscles and in the male tail. Not expressed in male somatic gonads or sperm.

Its subcellular location is the cell membrane. The protein resides in the perikaryon. It localises to the cell projection. It is found in the dendrite. In terms of biological role, G-protein coupled receptor. Plays a role in the navigational capacity of sperm and promotes the targeting of sperm derived from males to the fertilization site in the uterus of hermaphrodites. This Caenorhabditis elegans protein is Serpentine receptor class beta-16.